Reading from the N-terminus, the 260-residue chain is Tryptophan 2,3-dioxygenase (260 aa).

Residues 34–38 and Arg-100 each bind substrate; that span reads FIVIH. A heme-binding site is contributed by His-219. Thr-233 is a substrate binding site.

It belongs to the tryptophan 2,3-dioxygenase family. In terms of assembly, homotetramer. Heme is required as a cofactor.

It catalyses the reaction L-tryptophan + O2 = N-formyl-L-kynurenine. Its pathway is amino-acid degradation; L-tryptophan degradation via kynurenine pathway; L-kynurenine from L-tryptophan: step 1/2. Its function is as follows. Heme-dependent dioxygenase that catalyzes the oxidative cleavage of the L-tryptophan (L-Trp) pyrrole ring and converts L-tryptophan to N-formyl-L-kynurenine. Catalyzes the oxidative cleavage of the indole moiety. This is Tryptophan 2,3-dioxygenase from Herpetosiphon aurantiacus (strain ATCC 23779 / DSM 785 / 114-95).